The sequence spans 727 residues: Long-chain-fatty-acid--[acyl-carrier-protein] ligase AEE15, chloroplastic (727 aa).

The N-terminal 66 residues, 1 to 66 (MQIRLKPDYS…PSFRRFRVHC (66 aa)), are a transit peptide targeting the chloroplast.

Belongs to the ATP-dependent AMP-binding enzyme family.

It is found in the plastid. Its subcellular location is the chloroplast. The enzyme catalyses a long-chain fatty acid + holo-[ACP] + ATP = a long-chain fatty acyl-[ACP] + AMP + diphosphate. Probably involved in the activation of fatty acids to acyl-carrier-protein prior to fatty acid elongation in plastids. Acts on medium- to long-chain fatty acids. The sequence is that of Long-chain-fatty-acid--[acyl-carrier-protein] ligase AEE15, chloroplastic (AAE15) from Arabidopsis thaliana (Mouse-ear cress).